Reading from the N-terminus, the 380-residue chain is Queuine tRNA-ribosyltransferase (380 aa).

Asp-96 serves as the catalytic Proton acceptor. Substrate-binding positions include 96 to 100, Asp-150, Gln-193, and Gly-220; that span reads DSGGF. An RNA binding region spans residues 251-257; that stretch reads GVGAPDS. The Nucleophile role is filled by Asp-270. The tract at residues 275-279 is RNA binding; important for wobble base 34 recognition; the sequence is TRIAR. Residues Cys-308, Cys-310, Cys-313, and His-339 each contribute to the Zn(2+) site.

This sequence belongs to the queuine tRNA-ribosyltransferase family. In terms of assembly, homodimer. Within each dimer, one monomer is responsible for RNA recognition and catalysis, while the other monomer binds to the replacement base PreQ1. The cofactor is Zn(2+).

It catalyses the reaction 7-aminomethyl-7-carbaguanine + guanosine(34) in tRNA = 7-aminomethyl-7-carbaguanosine(34) in tRNA + guanine. It functions in the pathway tRNA modification; tRNA-queuosine biosynthesis. Functionally, catalyzes the base-exchange of a guanine (G) residue with the queuine precursor 7-aminomethyl-7-deazaguanine (PreQ1) at position 34 (anticodon wobble position) in tRNAs with GU(N) anticodons (tRNA-Asp, -Asn, -His and -Tyr). Catalysis occurs through a double-displacement mechanism. The nucleophile active site attacks the C1' of nucleotide 34 to detach the guanine base from the RNA, forming a covalent enzyme-RNA intermediate. The proton acceptor active site deprotonates the incoming PreQ1, allowing a nucleophilic attack on the C1' of the ribose to form the product. After dissociation, two additional enzymatic reactions on the tRNA convert PreQ1 to queuine (Q), resulting in the hypermodified nucleoside queuosine (7-(((4,5-cis-dihydroxy-2-cyclopenten-1-yl)amino)methyl)-7-deazaguanosine). The chain is Queuine tRNA-ribosyltransferase from Streptococcus gordonii (strain Challis / ATCC 35105 / BCRC 15272 / CH1 / DL1 / V288).